Consider the following 232-residue polypeptide: MAPPPSSTSIQVESIVFPPSVKPPGATTTLFLGGAGVRGMEIQGNFVKFTGIGVYLEDKAIPSLAVKWKGKTAAELTDSVQFYRDIVTGPFEKFSQVTMILPLTGKQYSEKVSEMCIGVWKAQGTYTDADTATIEKFLEVFKDENFLPGSSILFTTSPTGSLTISFSKDGNIPEAATVVLENRKLAQTVIESVIGEHGVSPEAKQSLASRLSDFMTQFDEKATANVESQIGL.

Substrate is bound by residues threonine 50 and serine 192.

This sequence belongs to the chalcone isomerase family.

The enzyme catalyses a chalcone = a flavanone.. It functions in the pathway secondary metabolite biosynthesis; flavonoid biosynthesis. In terms of biological role, catalyzes the intramolecular cyclization of bicyclic chalcones into tricyclic (S)-flavanones. Responsible for the isomerization of 4,2',4',6'-tetrahydroxychalcone (also termed chalcone) into naringenin. The protein is Chalcone--flavanone isomerase (CHI) of Saussurea medusa (Saw-wort).